A 59-amino-acid polypeptide reads, in one-letter code: Small, acid-soluble spore protein H 2 (59 aa).

Belongs to the SspH family.

It localises to the spore core. The protein is Small, acid-soluble spore protein H 2 of Bacillus cytotoxicus (strain DSM 22905 / CIP 110041 / 391-98 / NVH 391-98).